The sequence spans 509 residues: Heat shock 70 kDa protein 14 (509 aa).

It belongs to the heat shock protein 70 family. As to quaternary structure, component of ribosome-associated complex (RAC), a heterodimer composed of Hsp70/DnaK-type chaperone HSPA14 and Hsp40/DnaJ-type chaperone DNAJC2.

The protein localises to the cytoplasm. Its subcellular location is the cytosol. Functionally, component of the ribosome-associated complex (RAC), a complex involved in folding or maintaining nascent polypeptides in a folding-competent state. In the RAC complex, binds to the nascent polypeptide chain, while DNAJC2 stimulates its ATPase activity. The sequence is that of Heat shock 70 kDa protein 14 (HSPA14) from Pongo abelii (Sumatran orangutan).